A 195-amino-acid chain; its full sequence is Pyruvoyl-dependent arginine decarboxylase AaxB (195 aa).

Residue Ser53 is modified to Pyruvic acid (Ser).

This sequence belongs to the pyruvoyl-dependent arginine decarboxylase family. In terms of assembly, trimer of an alpha-beta dimer. Requires pyruvate as cofactor.

The protein localises to the cytoplasm. It catalyses the reaction L-arginine + H(+) = agmatine + CO2. Its function is as follows. Part of the AaxABC system, catalyzes the decarboxylation of L-arginine. The arginine uptake by the bacterium in the macrophage may be a virulence factor against the host innate immune response. The chain is Pyruvoyl-dependent arginine decarboxylase AaxB (aaxB) from Chlamydia muridarum (strain MoPn / Nigg).